Consider the following 265-residue polypeptide: Urease accessory protein UreH (265 aa).

It belongs to the UreD family. UreH, UreF and UreG form a complex that acts as a GTP-hydrolysis-dependent molecular chaperone, activating the urease apoprotein by helping to assemble the nickel containing metallocenter of UreC. The UreE protein probably delivers the nickel.

The protein resides in the cytoplasm. Functionally, required for maturation of urease via the functional incorporation of the urease nickel metallocenter. The chain is Urease accessory protein UreH from Helicobacter pylori (strain J99 / ATCC 700824) (Campylobacter pylori J99).